A 396-amino-acid chain; its full sequence is Succinyl-CoA:mesaconate CoA-transferase (396 aa).

The active-site Nucleophile is the aspartate 175.

It belongs to the CoA-transferase III family. Homodimer.

It catalyses the reaction mesaconate + succinyl-CoA = 2-methylfumaryl-CoA + succinate. Its activity is regulated as follows. Shows highest activity at 4 M KCl. Does not require divalent ions for activity. In terms of biological role, involved in the methylaspartate cycle. Catalyzes the transfer of the CoA moiety from succinyl-CoA to mesaconate to generate mesaconyl-CoA (2-methylfumaryl-CoA) and succinate. Also shows high activity with methylsuccinate as CoA-acceptor, and only low activity with glutarate, acrylate and itaconate. Cannot use other CoA donors like acetyl-CoA, propionyl-CoA, butyryl-CoA or acetoacetyl-CoA. The polypeptide is Succinyl-CoA:mesaconate CoA-transferase (Haloarcula hispanica (strain ATCC 33960 / DSM 4426 / JCM 8911 / NBRC 102182 / NCIMB 2187 / VKM B-1755)).